Consider the following 425-residue polypeptide: Isocitrate dehydrogenase [NADP] (425 aa).

Residue threonine 114 coordinates NADP(+). Residues serine 123, asparagine 125, arginine 129, arginine 139, and arginine 162 each contribute to the D-threo-isocitrate site. Aspartate 316 contacts Mg(2+). NADP(+)-binding positions include 348–354 (HGTAPKY), asparagine 361, tyrosine 400, and arginine 404.

It belongs to the isocitrate and isopropylmalate dehydrogenases family. As to quaternary structure, homodimer. Mg(2+) is required as a cofactor. It depends on Mn(2+) as a cofactor.

It catalyses the reaction D-threo-isocitrate + NADP(+) = 2-oxoglutarate + CO2 + NADPH. Functionally, catalyzes the oxidative decarboxylation of isocitrate to 2-oxoglutarate and carbon dioxide with the concomitant reduction of NADP(+). The protein is Isocitrate dehydrogenase [NADP] (icd) of Helicobacter pylori (strain J99 / ATCC 700824) (Campylobacter pylori J99).